The primary structure comprises 259 residues: Pimeloyl-[acyl-carrier protein] methyl ester esterase (259 aa).

Substrate-binding positions include W18, 78–79 (SL), and 139–143 (FLALD). S78 acts as the Nucleophile in catalysis. Residues D203 and H231 contribute to the active site. H231 is a substrate binding site.

It belongs to the AB hydrolase superfamily. Carboxylesterase BioH family. Monomer.

It localises to the cytoplasm. The enzyme catalyses 6-carboxyhexanoyl-[ACP] methyl ester + H2O = 6-carboxyhexanoyl-[ACP] + methanol + H(+). It functions in the pathway cofactor biosynthesis; biotin biosynthesis. The physiological role of BioH is to remove the methyl group introduced by BioC when the pimeloyl moiety is complete. It allows to synthesize pimeloyl-ACP via the fatty acid synthetic pathway through the hydrolysis of the ester bonds of pimeloyl-ACP esters. This is Pimeloyl-[acyl-carrier protein] methyl ester esterase from Stenotrophomonas maltophilia (strain K279a).